A 568-amino-acid polypeptide reads, in one-letter code: Lariat debranching enzyme (568 aa).

Residues cysteine 8, histidine 10, aspartate 39, and asparagine 84 each contribute to the a divalent metal cation site. The segment at 124–154 (SGIFKSHDFKKGHFEFPPYNPETLRSVYHIR) is lariat recognition loop. A divalent metal cation-binding residues include histidine 174, histidine 226, and histidine 228. Residues 388–568 (IYGERGGKGA…TAVEDEESDS (181 aa)) are disordered. Polar residues predominate over residues 417–428 (PSDTSGLSSSYN). The segment covering 432-444 (ITIEDEWEEEEDG) has biased composition (acidic residues). The segment covering 467-480 (DSDRDSSPQRETAK) has biased composition (basic and acidic residues). At threonine 478 the chain carries Phosphothreonine. Residues 534–549 (GETTQSSAGQTGGTPQ) show a composition bias toward low complexity. Serine 568 carries the post-translational modification Phosphoserine.

Belongs to the lariat debranching enzyme family. It depends on Fe(2+) as a cofactor. Requires Zn(2+) as cofactor. Mn(2+) is required as a cofactor.

It is found in the nucleus. Active in presence of diverse metals including Fe(2+), Zn(2+), Mn(2+). Also activated by Ca(2+). Binds two metal cations in two adjacent alpha and beta metal-binding pockets. Cleaves the 2'-5' phosphodiester linkage at the branch point of excised lariat intron RNA and converts them into linear molecules that can be subsequently degraded, thereby facilitating ribonucleotide turnover. Linked to its role in pre-mRNA processing mechanism, may also participate in retrovirus replication and have an antiviral cell-intrinsic defense function. The polypeptide is Lariat debranching enzyme (dbr1) (Danio rerio (Zebrafish)).